The primary structure comprises 535 residues: Ribonuclease Y (535 aa).

A helical transmembrane segment spans residues 4-24 (IILLIVSALIGLILGYALISI). Residues 118–141 (ENLSSKEKVLDSKEQSLTDKSKHI) are disordered. Residues 225–285 (TITSVHLPDD…IRREIARMTL (61 aa)) form the KH domain. In terms of domain architecture, HD spans 351–444 (VLRHSVEVGK…VAAADALSSA (94 aa)).

The protein belongs to the RNase Y family.

The protein resides in the cell membrane. Its function is as follows. Endoribonuclease that initiates mRNA decay. The protein is Ribonuclease Y of Streptococcus pyogenes serotype M18 (strain MGAS8232).